A 520-amino-acid chain; its full sequence is ATP-dependent RNA helicase CshA (520 aa).

A Q motif motif is present at residues 2–30 (TKFSEFGLDEKIVKSVNRMGFEEATPIQE). Positions 33–203 (IPLGLEGKDL…ERFMHSPELI (171 aa)) constitute a Helicase ATP-binding domain. ATP is bound at residue 46–53 (AQTGTGKT). A DEAD box motif is present at residues 151-154 (DEAD). Positions 214–374 (LIEQFFVKVH…PLQAPTWDEA (161 aa)) constitute a Helicase C-terminal domain. Over residues 428-439 (KTPVHITEERPL) the composition is skewed to basic and acidic residues. Positions 428–520 (KTPVHITEER…NKGNYSQKSK (93 aa)) are disordered. Composition is skewed to gly residues over residues 442 to 468 (RGGG…GKGG) and 482 to 496 (SGGG…GGGG).

Belongs to the DEAD box helicase family. CshA subfamily. As to quaternary structure, oligomerizes, may be a member of the RNA degradosome.

The protein localises to the cytoplasm. The catalysed reaction is ATP + H2O = ADP + phosphate + H(+). DEAD-box RNA helicase possibly involved in RNA degradation. Unwinds dsRNA in both 5'- and 3'-directions, has RNA-dependent ATPase activity. Involved in cold tolerance, motility and alcohol tolerance. This Listeria monocytogenes serovar 1/2a (strain ATCC BAA-679 / EGD-e) protein is ATP-dependent RNA helicase CshA.